Here is a 308-residue protein sequence, read N- to C-terminus: UDP-N-acetylenolpyruvoylglucosamine reductase (308 aa).

Residues 22-185 (RVGGPADWLF…VEAAFRADAG (164 aa)) enclose the FAD-binding PCMH-type domain. The active site involves Arg-165. Positions 197–211 (QIARRDSSQPTRDRS) are enriched in basic and acidic residues. The disordered stretch occupies residues 197-228 (QIARRDSSQPTRDRSAGSTFRNPAGFSSTGRA). Positions 212–226 (AGSTFRNPAGFSSTG) are enriched in polar residues. The active-site Proton donor is Ser-214. Residue Glu-296 is part of the active site.

The protein belongs to the MurB family. The cofactor is FAD.

It is found in the cytoplasm. The catalysed reaction is UDP-N-acetyl-alpha-D-muramate + NADP(+) = UDP-N-acetyl-3-O-(1-carboxyvinyl)-alpha-D-glucosamine + NADPH + H(+). The protein operates within cell wall biogenesis; peptidoglycan biosynthesis. Cell wall formation. The polypeptide is UDP-N-acetylenolpyruvoylglucosamine reductase (Cereibacter sphaeroides (strain ATCC 17025 / ATH 2.4.3) (Rhodobacter sphaeroides)).